A 464-amino-acid polypeptide reads, in one-letter code: Glutamate decarboxylase beta (464 aa).

K275 carries the post-translational modification N6-(pyridoxal phosphate)lysine.

This sequence belongs to the group II decarboxylase family. It depends on pyridoxal 5'-phosphate as a cofactor.

The catalysed reaction is L-glutamate + H(+) = 4-aminobutanoate + CO2. Converts internalized glutamate to GABA and increases the internal pH. Involved in glutamate-dependent acid resistance in gastric fluid. This chain is Glutamate decarboxylase beta (gadB), found in Listeria innocua serovar 6a (strain ATCC BAA-680 / CLIP 11262).